A 373-amino-acid chain; its full sequence is Deoxyguanosinetriphosphate triphosphohydrolase-like protein 1 (373 aa).

A disordered region spans residues 21–43 (RSSEARRAVPEAPSETRTAYQKD). One can recognise an HD domain in the interval 76–198 (RLTHTLEVQQ…VDAADALAYT (123 aa)).

The protein belongs to the dGTPase family. Type 2 subfamily.

The protein is Deoxyguanosinetriphosphate triphosphohydrolase-like protein 1 of Deinococcus radiodurans (strain ATCC 13939 / DSM 20539 / JCM 16871 / CCUG 27074 / LMG 4051 / NBRC 15346 / NCIMB 9279 / VKM B-1422 / R1).